Consider the following 636-residue polypeptide: Capsid vertex component 2 (636 aa).

An interaction with major capsid protein/MCP region spans residues 1–48 (MSLLHTFWRLPVAVFFEPHEENVLRCPERVLRRLLEDAAVAMRGGGWR). The disordered stretch occupies residues 97 to 125 (DEGPSPRTLLQPPCRPRSSSPGTGVAGAS).

The protein belongs to the herpesviridae CVC2 protein family. As to quaternary structure, heterodimerizes with CVC1. Interacts with major capsid protein/MCP and triplex capsid protein 1/TRX1 at the pentamer vertices. Interacts with the large tegument protein/LTP.

The protein resides in the virion. The protein localises to the host nucleus. Capsid vertex-specific component that plays a role during viral DNA encapsidation, assuring correct genome cleavage and presumably stabilizing capsids that contain full-length viral genomes. Participates in the interaction between the capsid and the tegument through interaction with the large tegument protein/LTP. The chain is Capsid vertex component 2 from Homo sapiens (Human).